A 2194-amino-acid polypeptide reads, in one-letter code: Genome polyprotein (2194 aa).

Glycine 2 carries N-myristoyl glycine; by host lipidation. At 2-1504 (GAQVSTQKTG…HVSRAFICLQ (1503 aa)) the chain is on the cytoplasmic side. The tract at residues 566–582 (LYQNDPEGALNKAVGRV) is amphipathic alpha-helix. Catalysis depends on for protease 2A activity residues histidine 881 and aspartate 899. Zn(2+) contacts are provided by cysteine 916 and cysteine 918. Cysteine 970 (for protease 2A activity) is an active-site residue. The Zn(2+) site is built by cysteine 976 and histidine 978. The interval 1110–1182 (NNNWLKKFTE…EQSAPSQSDQ (73 aa)) is membrane-binding. An oligomerization region spans residues 1110–1248 (NNNWLKKFTE…SPGAGKSVAT (139 aa)). Positions 1131–1135 (AIKIQ) are RNA-binding. In terms of domain architecture, SF3 helicase spans 1214–1370 (EKKMSNYIQF…SMYSQNGKIN (157 aa)). Zn(2+)-binding residues include cysteine 1378, cysteine 1390, and cysteine 1395. A C4-type; degenerate zinc finger spans residues 1378–1395 (CDEECCPVNFKRCCPLVC). The RNA-binding stretch occupies residues 1422–1429 (EYNHRHSV). The tract at residues 1433-1438 (LEALFQ) is oligomerization. Residues 1505 to 1520 (ALTTFVSVAGIIYIIY) lie within the membrane without spanning it. At 1521-2194 (KLFAGFQGAY…TLRRKWLDSF (674 aa)) the chain is on the cytoplasmic side. Residue tyrosine 1530 is modified to O-(5'-phospho-RNA)-tyrosine. The 179-residue stretch at 1550-1728 (GPAFEFAVAM…FSAALLRHYF (179 aa)) folds into the Peptidase C3 domain. Active-site for protease 3C activity residues include histidine 1589, glutamate 1620, and cysteine 1696. The RdRp catalytic domain maps to 1959 to 2075 (GHLIAFDYSG…SYPHPIDASL (117 aa)). Aspartate 1965 and aspartate 2061 together coordinate Mg(2+).

The protein belongs to the picornaviruses polyprotein family. In terms of assembly, interacts with capsid protein VP1 and capsid protein VP3 to form heterotrimeric protomers. Interacts with capsid protein VP0, and capsid protein VP3 to form heterotrimeric protomers. Five protomers subsequently associate to form pentamers which serve as building blocks for the capsid. Interacts with capsid protein VP2, capsid protein VP3 and capsid protein VP4 following cleavage of capsid protein VP0. As to quaternary structure, interacts with capsid protein VP1 and capsid protein VP3 in the mature capsid. In terms of assembly, interacts with capsid protein VP0 and capsid protein VP1 to form heterotrimeric protomers. Five protomers subsequently associate to form pentamers which serve as building blocks for the capsid. Interacts with capsid protein VP4 in the mature capsid. Interacts with protein 2C; this interaction may be important for virion morphogenesis. Interacts with capsid protein VP1 and capsid protein VP3. As to quaternary structure, homodimer. In terms of assembly, homohexamer; forms a hexameric ring structure with 6-fold symmetry characteristic of AAA+ ATPases. Interacts (via N-terminus) with host RTN3 (via reticulon domain); this interaction is important for viral replication. Interacts with capsid protein VP3; this interaction may be important for virion morphogenesis. Interacts with protein 3CD. As to quaternary structure, homodimer. Interacts with host GBF1. Interacts (via GOLD domain) with host ACBD3 (via GOLD domain); this interaction allows the formation of a viral protein 3A/ACBD3 heterotetramer with a 2:2 stoichiometry, which will stimulate the recruitment of host PI4KB in order to synthesize PI4P at the viral RNA replication sites. In terms of assembly, interacts with RNA-directed RNA polymerase. Interacts with protein 3AB and with RNA-directed RNA polymerase. As to quaternary structure, interacts with Viral protein genome-linked and with protein 3CD. It depends on Mg(2+) as a cofactor. Post-translationally, specific enzymatic cleavages in vivo by the viral proteases yield processing intermediates and the mature proteins. Myristoylation is required for the formation of pentamers during virus assembly. Further assembly of 12 pentamers and a molecule of genomic RNA generates the provirion. In terms of processing, during virion maturation, immature virions are rendered infectious following cleavage of VP0 into VP4 and VP2. This maturation seems to be an autocatalytic event triggered by the presence of RNA in the capsid and it is followed by a conformational change infectious virion. Post-translationally, myristoylation is required during RNA encapsidation and formation of the mature virus particle. VPg is uridylylated by the polymerase into VPg-pUpU. This acts as a nucleotide-peptide primer for the genomic RNA replication.

It is found in the virion. It localises to the host cytoplasm. The protein localises to the host cytoplasmic vesicle membrane. Its subcellular location is the host nucleus. The enzyme catalyses a ribonucleoside 5'-triphosphate + H2O = a ribonucleoside 5'-diphosphate + phosphate + H(+). It carries out the reaction Selective cleavage of Tyr-|-Gly bond in the picornavirus polyprotein.. It catalyses the reaction RNA(n) + a ribonucleoside 5'-triphosphate = RNA(n+1) + diphosphate. The catalysed reaction is Selective cleavage of Gln-|-Gly bond in the poliovirus polyprotein. In other picornavirus reactions Glu may be substituted for Gln, and Ser or Thr for Gly.. Replication or transcription is subject to high level of random mutations by the nucleotide analog ribavirin. Functionally, forms an icosahedral capsid of pseudo T=3 symmetry with capsid proteins VP2 and VP3. The capsid is 300 Angstroms in diameter, composed of 60 copies of each capsid protein and enclosing the viral positive strand RNA genome. Capsid protein VP1 mainly forms the vertices of the capsid. Capsid protein VP1 interacts with host cell receptor to provide virion attachment to target host cells. This attachment induces virion internalization. Tyrosine kinases are probably involved in the entry process. After binding to its receptor, the capsid undergoes conformational changes. Capsid protein VP1 N-terminus (that contains an amphipathic alpha-helix) and capsid protein VP4 are externalized. Together, they shape a pore in the host membrane through which viral genome is translocated to host cell cytoplasm. Its function is as follows. Forms an icosahedral capsid of pseudo T=3 symmetry with capsid proteins VP2 and VP3. The capsid is 300 Angstroms in diameter, composed of 60 copies of each capsid protein and enclosing the viral positive strand RNA genome. In terms of biological role, lies on the inner surface of the capsid shell. After binding to the host receptor, the capsid undergoes conformational changes. Capsid protein VP4 is released, Capsid protein VP1 N-terminus is externalized, and together, they shape a pore in the host membrane through which the viral genome is translocated into the host cell cytoplasm. Component of immature procapsids, which is cleaved into capsid proteins VP4 and VP2 after maturation. Allows the capsid to remain inactive before the maturation step. Functionally, cysteine protease that cleaves viral polyprotein and specific host proteins. It is responsible for the autocatalytic cleavage between the P1 and P2 regions, which is the first cleavage occurring in the polyprotein. Also cleaves the host translation initiation factor EIF4G1, in order to shut down the capped cellular mRNA translation. Inhibits the host nucleus-cytoplasm protein and RNA trafficking by cleaving host members of the nuclear pores. Counteracts stress granule formation probably by antagonizing its assembly or promoting its dissassembly. Its function is as follows. Plays an essential role in the virus replication cycle by acting as a viroporin. Creates a pore in the host endoplasmic reticulum and as a consequence releases Ca2+ in the cytoplasm of infected cell. In turn, high levels of cytoplasmic calcium may trigger membrane trafficking and transport of viral ER-associated proteins to viroplasms, sites of viral genome replication. In terms of biological role, induces and associates with structural rearrangements of intracellular membranes. Displays RNA-binding, nucleotide binding and NTPase activities. May play a role in virion morphogenesis and viral RNA encapsidation by interacting with the capsid protein VP3. Localizes the viral replication complex to the surface of membranous vesicles. Together with protein 3CD binds the Cis-Active RNA Element (CRE) which is involved in RNA synthesis initiation. Acts as a cofactor to stimulate the activity of 3D polymerase, maybe through a nucleid acid chaperone activity. Functionally, localizes the viral replication complex to the surface of membranous vesicles. It inhibits host cell endoplasmic reticulum-to-Golgi apparatus transport and causes the disassembly of the Golgi complex, possibly through GBF1 interaction. This would result in depletion of MHC, trail receptors and IFN receptors at the host cell surface. Plays an essential role in viral RNA replication by recruiting ACBD3 and PI4KB at the viral replication sites, thereby allowing the formation of the rearranged membranous structures where viral replication takes place. Its function is as follows. Acts as a primer for viral RNA replication and remains covalently bound to viral genomic RNA. VPg is uridylylated prior to priming replication into VPg-pUpU. The oriI viral genomic sequence may act as a template for this. The VPg-pUpU is then used as primer on the genomic RNA poly(A) by the RNA-dependent RNA polymerase to replicate the viral genome. During genome replication, the VPg-RNA linkage is removed by the host TDP2, thereby accelerating replication. During the late stage of the replication cycle, host TDP2 is excluded from sites of viral RNA synthesis and encapsidation, allowing for the generation of progeny virions. In terms of biological role, involved in the viral replication complex and viral polypeptide maturation. It exhibits protease activity with a specificity and catalytic efficiency that is different from protease 3C. Protein 3CD lacks polymerase activity. Protein 3CD binds to the 5'UTR of the viral genome. Replicates the viral genomic RNA on the surface of intracellular membranes. May form linear arrays of subunits that propagate along a strong head-to-tail interaction called interface-I. Covalently attaches UMP to a tyrosine of VPg, which is used to prime RNA synthesis. The positive stranded RNA genome is first replicated at virus induced membranous vesicles, creating a dsRNA genomic replication form. This dsRNA is then used as template to synthesize positive stranded RNA genomes. ss(+)RNA genomes are either translated, replicated or encapsidated. Functionally, major viral protease that mediates proteolytic processing of the polyprotein. Cleaves host EIF5B, contributing to host translation shutoff. Also cleaves host PABPC1, contributing to host translation shutoff. Cleaves host NLRP1, triggers host N-glycine-mediated degradation of the autoinhibitory NLRP1 N-terminal fragment. In Homo sapiens (Human), this protein is Genome polyprotein.